Here is a 912-residue protein sequence, read N- to C-terminus: MNWIFNTLIQFLEDLNIDPSVVSLIDEDAKKLEEQFPKALKHPVVDEEIVYKILCEKYNLNALNVKTISETLNKEYKFGRNSKTALKKYLDYGKEEYLIQFFNTLMLENNTYIDREYIESVLAFCEPVSKEKIKNEFIKLWNEANEVNEYGKLKDYLLGIYSKLFSMGLENLRLIEIYNSNESLIKKVFKYESTIKELKEYCLSNQESITAGLAIKMFNEKYMELMKKEYQQDAIALKLEEHMNQLYVDNNINEYPYIFDRGNDILLLPTEEYDFVYFHIDQDFFNRFQDENKFLDYVLSSIKQIYRVLANEKVFALKIDNIYNNEKNLKWELYPKLTIYSEHFIQTKETARFYKAYDIAKDLLSKHEFRLLENDSEKNRENILKEYFSGKISEDELFSLVHVNMKKEHFFEFLNRFKYVHYGFTFNDCLVLDRVDKSFANGELENVISNATEILLIFYKFRADQRRIPCPSCGSLNISGNSYPEINNRSWECKSPYCPDRSKSNRGKRYSKKSNYMQWGAIYPKSHDIIPRELIKKWRRDIIVINNEQEIFEMLVKYFSFTDEKLLFINTNELPSVVTERENRKVVILSQKLKEKAYTSNVVVKESLEGEIEFFKNGLYLKNFTELYLPEDQRRVSPEINNFLNSGGRLKLIQGDSYEVLKSVEDNTFAAAVTSPPYYNAREYSQWPNLYLYFNDMYNIIKECFRTLKPGSVFLYNIADIVDNENIIVKSSMGNKRIPLGAYTIYFFQKAGFELLDNIIWDKGEPQSNRQKNDGKFTPHYQKPLNAYEHMFIFKKTGAPLTLSDDWQSKRGSWIKNIVPFQPVFKINSKGENILGHTAPFPEDIPRFVANVFTKHDNDIILDPFSGSLTSAIASYKSNRIGLGIELSPDYVELSRDRALLEGVTTKILNFN.

The protein belongs to the N(4)/N(6)-methyltransferase family. N(4) subfamily.

The enzyme catalyses a 2'-deoxycytidine in DNA + S-adenosyl-L-methionine = an N(4)-methyl-2'-deoxycytidine in DNA + S-adenosyl-L-homocysteine + H(+). Its function is as follows. A beta subtype methylase. Recognizes the double-stranded sequence 5'-CCN(7)GG-3', methylates C-2 on both strands, and protects the DNA from cleavage by the BslI endonuclease. The polypeptide is Type II beta methyltransferase M.BslI (bslIM) (Bacillus sp. (strain NEB-606)).